Consider the following 602-residue polypeptide: Arp2/3 complex-activating protein rickA (602 aa).

3 disordered regions span residues S307–K484, V516–Q535, and M555–K602. A compositionally biased stretch (pro residues) spans T318–A442. 2 consecutive WH2 domains span residues D472–V489 and S499–V516. A compositionally biased stretch (basic and acidic residues) spans D475–K484. The central and acidic domains stretch occupies residues V537 to D570. Over residues M555 to G566 the composition is skewed to low complexity. Over residues K578 to L590 the composition is skewed to basic residues. The span at N591–K602 shows a compositional bias: polar residues.

As to quaternary structure, homodimer.

It is found in the cell surface. Its function is as follows. Recruits and activates the Arp2/3 complex, which in turn leads to actin polymerization, promoting Rickettsia motility during infection. The chain is Arp2/3 complex-activating protein rickA (rickA) from Rickettsia montanensis.